Consider the following 206-residue polypeptide: MTVYKGIYTVGITGASGAQYGIRLVQEMKKKGYKVHLVITEAGWQVFREELLIQTDDRKMVIDELFAAGDGEVSFHQLDDYTAPIASGSYQNRGMIIIPCSMGTLSGIAQGASGNLLERTADVMLKEKRRLVIVPRETPLNQIHLENMLKLSKMGVTILPAMPGFYQLPKTMDDLIDFVVGKALDQLGIEHELFTRWGEERDNHSR.

Residues 14–16, T40, 101–104, and R136 each bind FMN; these read GAS and SMGT. Residues Y166 and K182 each contribute to the dimethylallyl phosphate site.

This sequence belongs to the UbiX/PAD1 family.

The catalysed reaction is dimethylallyl phosphate + FMNH2 = prenylated FMNH2 + phosphate. Its function is as follows. Flavin prenyltransferase that catalyzes the synthesis of the prenylated FMN cofactor (prenyl-FMN) for 4-hydroxy-3-polyprenylbenzoic acid decarboxylase UbiD. The prenyltransferase is metal-independent and links a dimethylallyl moiety from dimethylallyl monophosphate (DMAP) to the flavin N5 and C6 atoms of FMN. This Halalkalibacterium halodurans (strain ATCC BAA-125 / DSM 18197 / FERM 7344 / JCM 9153 / C-125) (Bacillus halodurans) protein is Flavin prenyltransferase UbiX.